We begin with the raw amino-acid sequence, 281 residues long: uncharacterized protein (281 aa).

Positions 1–30 (MVQIQFHQGEPLGHKKEKPPPVSPPSPPPI) are disordered. Over residues 20–30 (PPVSPPSPPPI) the composition is skewed to pro residues. 7 consecutive transmembrane segments (helical) span residues 58 to 78 (TVVF…LIPW), 88 to 107 (TLPF…AYWL), 117 to 137 (MLVM…GLCF), 145 to 165 (AYVL…LMAW), 171 to 191 (LAIL…IAVQ), 196 to 216 (YQRI…IVLI), and 248 to 268 (VIMF…PNYA).

Belongs to the cytomegalovirus US12 family.

It is found in the host membrane. This is an uncharacterized protein from Homo sapiens (Human).